Reading from the N-terminus, the 554-residue chain is GPI alpha-1,2-mannosyltransferase 3 (554 aa).

N26 carries N-linked (GlcNAc...) asparagine glycosylation. Transmembrane regions (helical) follow at residues 63–83 (LLLFTIALRILNCFLVQTSFV), 136–156 (VQLLIWIPRLAQALLSAVADV), 192–212 (LTNTMETVLTIIALFYYPLEG), 224–244 (LVALAFIIRPTAVILWTPLLF), 255–275 (DLILHHFLPVGFVTLSLSLMI), 315–335 (GFPVILGTHLPFFIHGCYLAP), 340–360 (ILLVTVLWTLLVYSMLSHKEF), 362–382 (FIYPVLPFCMVFCGYSLTHLK), and 387–407 (PALSFLFLSNLFLALYTGLVH). N-linked (GlcNAc...) asparagine glycosylation occurs at N427.

The protein belongs to the glycosyltransferase 22 family. PIGB subfamily.

The protein resides in the endoplasmic reticulum membrane. The protein operates within glycolipid biosynthesis; glycosylphosphatidylinositol-anchor biosynthesis. In terms of biological role, alpha-1,2-mannosyltransferase that catalyzes the transfer of the third mannose, via an alpha-1,2 bond, from a dolichol-phosphate-mannose (Dol-P-Man) to an alpha-D-Man-(1-&gt;6)-2-PEtn-alpha-D-Man-(1-&gt;4)-alpha-D-GlcN-(1-&gt;6)-(1-radyl,2-acyl-sn-glycero-3-phospho)-2-acyl-inositol intermediate to generate an alpha-D-Man-(1-&gt;2)-alpha-D-Man-(1-&gt;6)-2-PEtn-alpha-D-Man-(1-&gt;4)-alpha-D-GlcN-(1-&gt;6)-(1-radyl,2-acyl-sn-glycero-3-phospho)-2-acyl-inositol (also termed H6) and participates in the nineth step of the glycosylphosphatidylinositol-anchor biosynthesis. May also add the third mannose to an alpha-D-Man-(1-&gt;6)-alpha-D-Man-(1-&gt;4)-alpha-D-GlcN-(1-&gt;6)-(1-radyl,2-acyl-sn-glycero-3-phospho)-2-acyl-inositol (also termed H3) intermediate generating an alpha-D-Man-(1-&gt;2)-alpha-D-Man-(1-&gt;6)-alpha-D-Man-(1-&gt;4)-alpha-D-GlcN-(1-&gt;6)-(1-radyl,2-acyl-sn-glycero-3-phospho)-2-acyl-inositol (also termed H4). The protein is GPI alpha-1,2-mannosyltransferase 3 of Homo sapiens (Human).